The sequence spans 196 residues: Large ribosomal subunit protein bL9 (196 aa).

This sequence belongs to the bacterial ribosomal protein bL9 family.

In terms of biological role, binds to the 23S rRNA. This Gluconobacter oxydans (strain 621H) (Gluconobacter suboxydans) protein is Large ribosomal subunit protein bL9.